The chain runs to 359 residues: Epoxide hydrolase 4 (359 aa).

The chain crosses the membrane as a helical; Signal-anchor for type II membrane protein span at residues 15-35; the sequence is ALLYWSLVYGYCGLCASVHLL. Residues 92-337 form the AB hydrolase-1 domain; sequence PLMLLLHGFP…ILSEGSHWLQ (246 aa). Asp-167 functions as the Nucleophile in the catalytic mechanism. Catalysis depends on Tyr-279, which acts as the Proton donor. His-334 serves as the catalytic Proton acceptor.

The protein belongs to the AB hydrolase superfamily. Epoxide hydrolase family.

The protein localises to the membrane. This Mus musculus (Mouse) protein is Epoxide hydrolase 4 (Ephx4).